We begin with the raw amino-acid sequence, 308 residues long: MTKFRAAVVQAAPVPNDVEATIEKTINLIREAAARGANVAVFPEAFIGGYPKGANFNIHIGARTPEGRQEFADYRAGAIAVPGSETEQLAQAAHEAGLYLTIGVIERDGGTLYCTALYFTPDGLAGKHRKLMPTGAERLCWGFGDGSTLDTVQTPWGSMGAVICWENYMPLMRTAMYGKGIALYCAPTADDRDSWAATMRHIALEGRCFVLSACQYLTRKDFPESMGNRITDEPDAVLMRGGAIIVDPLGRVVAGPDYSGETILTADLDTDDIPRAQFDFDVVGHYARPDVFKLVVDEEPKSAVVTRA.

The CN hydrolase domain maps to 4-270 (FRAAVVQAAP…ETILTADLDT (267 aa)). The active-site Proton acceptor is E44. K130 is an active-site residue. C164 (nucleophile) is an active-site residue.

Belongs to the carbon-nitrogen hydrolase superfamily. Nitrilase family.

It carries out the reaction a nitrile + 2 H2O = a carboxylate + NH4(+). Its function is as follows. Nitrilase that hydrolyzes preferentially phenylacetonitrile, but not (R,S)-mandelonitrile. Also acts on dinitriles like phenylenediacetonitriles (PDAs) 1,2-PDA, 1,3-PDA, and 1,4-PDA, and cyanophenyl acetonitriles (CPAs) 2-CPA and 4-CPA, but with lower activities. The sequence is that of Aliphatic nitrilase (nit) from Sinorhizobium fredii (strain HH103).